A 339-amino-acid polypeptide reads, in one-letter code: DNA-directed RNA polymerase subunit alpha (339 aa).

Residues M1–E233 form an alpha N-terminal domain (alpha-NTD) region. An alpha C-terminal domain (alpha-CTD) region spans residues G266–F339.

This sequence belongs to the RNA polymerase alpha chain family. In plastids the minimal PEP RNA polymerase catalytic core is composed of four subunits: alpha, beta, beta', and beta''. When a (nuclear-encoded) sigma factor is associated with the core the holoenzyme is formed, which can initiate transcription.

It is found in the plastid. Its subcellular location is the chloroplast. The catalysed reaction is RNA(n) + a ribonucleoside 5'-triphosphate = RNA(n+1) + diphosphate. In terms of biological role, DNA-dependent RNA polymerase catalyzes the transcription of DNA into RNA using the four ribonucleoside triphosphates as substrates. The chain is DNA-directed RNA polymerase subunit alpha from Hordeum bulbosum (Bulbous barley).